Here is a 161-residue protein sequence, read N- to C-terminus: N5-carboxyaminoimidazole ribonucleotide mutase (161 aa).

Substrate-binding residues include S9, D12, and R39.

This sequence belongs to the AIR carboxylase family. Class I subfamily.

It catalyses the reaction 5-carboxyamino-1-(5-phospho-D-ribosyl)imidazole + H(+) = 5-amino-1-(5-phospho-D-ribosyl)imidazole-4-carboxylate. The protein operates within purine metabolism; IMP biosynthesis via de novo pathway; 5-amino-1-(5-phospho-D-ribosyl)imidazole-4-carboxylate from 5-amino-1-(5-phospho-D-ribosyl)imidazole (N5-CAIR route): step 2/2. Catalyzes the conversion of N5-carboxyaminoimidazole ribonucleotide (N5-CAIR) to 4-carboxy-5-aminoimidazole ribonucleotide (CAIR). In Vibrio vulnificus (strain CMCP6), this protein is N5-carboxyaminoimidazole ribonucleotide mutase.